Here is a 663-residue protein sequence, read N- to C-terminus: Translation factor GUF1 homolog, mitochondrial (663 aa).

The tr-type G domain occupies 64–250 (EKIRNFSIIA…AVIERIPPPP (187 aa)). GTP contacts are provided by residues 73–80 (AHIDHGKS), 143–147 (DTPGH), and 197–200 (NKID).

It belongs to the TRAFAC class translation factor GTPase superfamily. Classic translation factor GTPase family. LepA subfamily.

The protein localises to the mitochondrion inner membrane. It carries out the reaction GTP + H2O = GDP + phosphate + H(+). Functionally, promotes mitochondrial protein synthesis. May act as a fidelity factor of the translation reaction, by catalyzing a one-codon backward translocation of tRNAs on improperly translocated ribosomes. Binds to mitochondrial ribosomes in a GTP-dependent manner. The polypeptide is Translation factor GUF1 homolog, mitochondrial (Arabidopsis thaliana (Mouse-ear cress)).